Consider the following 577-residue polypeptide: Arginine--tRNA ligase (577 aa).

Residues 122–132 carry the 'HIGH' region motif; the sequence is PNVAKEMHVGH.

Belongs to the class-I aminoacyl-tRNA synthetase family. In terms of assembly, monomer.

It localises to the cytoplasm. It catalyses the reaction tRNA(Arg) + L-arginine + ATP = L-arginyl-tRNA(Arg) + AMP + diphosphate. This is Arginine--tRNA ligase from Escherichia coli (strain K12 / MC4100 / BW2952).